The sequence spans 215 residues: Cytochrome b6 (215 aa).

The helical transmembrane segment at 32-52 (IFYCLGGITLTCFLVQVATGF) threads the bilayer. Cys-35 lines the heme c pocket. Positions 86 and 100 each coordinate heme b. 3 helical membrane passes run 90-110 (ASMMVLMMILHVFRVYLTGGF), 116-136 (LTWVTGVVLAVLTASFGVTGY), and 186-206 (LHTFVLPLVSAVFMLIHFLMI). Heme b-binding residues include His-187 and His-202.

The protein belongs to the cytochrome b family. PetB subfamily. In terms of assembly, the 4 large subunits of the cytochrome b6-f complex are cytochrome b6, subunit IV (17 kDa polypeptide, PetD), cytochrome f and the Rieske protein, while the 4 small subunits are PetG, PetL, PetM and PetN. The complex functions as a dimer. The cofactor is heme b. Heme c is required as a cofactor.

It is found in the plastid. Its subcellular location is the chloroplast thylakoid membrane. Its function is as follows. Component of the cytochrome b6-f complex, which mediates electron transfer between photosystem II (PSII) and photosystem I (PSI), cyclic electron flow around PSI, and state transitions. This Pelargonium hortorum (Common geranium) protein is Cytochrome b6.